A 572-amino-acid chain; its full sequence is MALTIPRSQYVATYGPTVGDKVRLGDTDLWATIEQDFLTKGDECKFGGGKSVRDGMAQSSTATRDNPNVLDFALTNVMIIDAKLGIIKADIGIRDGRIVGIGQAGNPDTMDNVTPNMIIGASTEVHNGAHLIATAGGIDTHIHWICPQQAQHAIENGITTMIGGGSGPADGTHATTCTPGKFNIERMFQACEALPVNIGFFGKGNCSMLEPLKEQVVAGALGLKIHEDWGATPAVIDAALKVADEMDVQVAIHTDTLNESGFLEDTMKAINGRVIHTFHTEGAGGGHAPDIIKAAMYPNVLPASTNPNRPFTVNTIDEHLDMLMVCHHLDKRVPEDVAFADSRIRPETIAAEDILHDMGVFSIMSSDSQAMGRVGEVVTRTWQTADKMKAQRGALGDEGNDNFRIKRYIAKYTINPAIAHGISQYVGSLEVGKLADIVLWKPQFFGVKPEFVMKKGFISFAKMGDPNASIPTPQPVFYRPMFGANAKANTESAVYFVSQASVDANIKAQYGIQKETLAVKGCRDVGKKDLVHNNATPEITVDTERYEVRVDGEHITCEPATKVPLAQRYFLF.

A Urease domain is found at 136-572 (GGIDTHIHWI…VPLAQRYFLF (437 aa)). 3 residues coordinate Ni(2+): His141, His143, and Lys224. Position 224 is an N6-carboxylysine (Lys224). Substrate is bound at residue His226. His253 and His279 together coordinate Ni(2+). The Proton donor role is filled by His327. Ni(2+) is bound at residue Asp367.

Belongs to the metallo-dependent hydrolases superfamily. Urease alpha subunit family. Heterotrimer of UreA (gamma), UreB (beta) and UreC (alpha) subunits. Three heterotrimers associate to form the active enzyme. It depends on Ni cation as a cofactor. In terms of processing, carboxylation allows a single lysine to coordinate two nickel ions.

The protein localises to the cytoplasm. The enzyme catalyses urea + 2 H2O + H(+) = hydrogencarbonate + 2 NH4(+). Its pathway is nitrogen metabolism; urea degradation; CO(2) and NH(3) from urea (urease route): step 1/1. In Actinobacillus pleuropneumoniae (Haemophilus pleuropneumoniae), this protein is Urease subunit alpha.